We begin with the raw amino-acid sequence, 457 residues long: DNA repair protein RadA (457 aa).

Residues 12–29 (CQACGYESAKWMGKCPNC) form a C4-type zinc finger. Residue 97–104 (GDPGIGKS) coordinates ATP. Residues 254–258 (KNRFG) carry the RadA KNRFG motif motif. The segment at 353-457 (DAYLKAAGGV…GEALKKALPD (105 aa)) is lon-protease-like.

It belongs to the RecA family. RadA subfamily.

Its function is as follows. DNA-dependent ATPase involved in processing of recombination intermediates, plays a role in repairing DNA breaks. Stimulates the branch migration of RecA-mediated strand transfer reactions, allowing the 3' invading strand to extend heteroduplex DNA faster. Binds ssDNA in the presence of ADP but not other nucleotides, has ATPase activity that is stimulated by ssDNA and various branched DNA structures, but inhibited by SSB. Does not have RecA's homology-searching function. The chain is DNA repair protein RadA from Listeria monocytogenes serovar 1/2a (strain ATCC BAA-679 / EGD-e).